The primary structure comprises 2280 residues: Genome polyprotein (2280 aa).

One can recognise an SF3 helicase domain in the interval Glu454–Lys608. Residue Gly480–Thr487 participates in ATP binding. The residue at position 965 (Tyr965) is an O-(5'-phospho-RNA)-tyrosine. The Peptidase C24 domain maps to Gly1054–Glu1202. Catalysis depends on for 3CLpro activity residues His1084, Glu1105, and Cys1169. In terms of domain architecture, RdRp catalytic spans Gly1442–Phe1567. Positions Gly1722–Pro1746 are disordered. Residues Asn1723 to Pro1735 show a composition bias toward polar residues.

Homodimer. Homomultimer. Post-translationally, specific enzymatic cleavages in vivo yield mature proteins. Pro-Pol is first autocatalytically cleaved, then processes the whole polyprotein. VPg is uridylylated by the polymerase and is covalently attached to the 5'-end of the polyadenylated genomic and subgenomic RNAs. This uridylylated form acts as a nucleotide-peptide primer for the polymerase.

The protein localises to the virion. It is found in the host cytoplasm. It carries out the reaction a ribonucleoside 5'-triphosphate + H2O = a ribonucleoside 5'-diphosphate + phosphate + H(+). The catalysed reaction is RNA(n) + a ribonucleoside 5'-triphosphate = RNA(n+1) + diphosphate. The enzyme catalyses Endopeptidase with a preference for cleavage when the P1 position is occupied by Glu-|-Xaa and the P1' position is occupied by Gly-|-Yaa.. Together with NTPase and NS4, initiates the formation of the replication complex. Induces the proliferation of the host smooth ER membranes forming long tubular structures. These remodeled membranes probably form the viral factories that contain the replication complex. Its function is as follows. Displays NTPase activity, but no helicase activity. Induces the formation of convoluted membranes derived from the host ER. These remodeled membranes probably form the viral factories that contain the replication complex. Together with NS2 and NS4, initiates the formation of the replication complex. In terms of biological role, probable key protein responsible for the formation of membrane alterations by the virus. Induces the formation of convoluted membranes derived from the host ER. These remodeled membranes probably form the viral factories that contain the replication complex. Together with NS2 and NTPase, initiates the formation of the replication complex. Functionally, viral genome-linked protein is covalently linked to the 5'-end of the positive-strand, negative-strand genomic RNAs and subgenomic RNA. Acts as a genome-linked replication primer. May recruit ribosome to viral RNA thereby promoting viral proteins translation. Interacts with host translation initiation complex to allow the translation of viral proteins. Protease-polymerase p76 processes the polyprotein: Pro-Pol is first released by autocleavage, then all other proteins are cleaved. Cleaves host translation initiation factor eIF4G1, eIF4G2 and PABP1 thereby inducing a shutdown of host protein synthesis. This shutdown may not prevent viral mRNA from being translated since viral Vpg replaces the cap. It is also an RNA-directed RNA polymerase which replicates genomic and antigenomic viral RNA by recognizing specific signals. Also transcribes a subgenomic mRNA by initiating RNA synthesis internally on antigenomic RNA. This sgRNA codes for structural proteins. Catalyzes the covalent attachment VPg with viral RNAs. Its function is as follows. Capsid protein self assembles to form an icosahedral capsid with a T=3 symmetry, about 38 nm in diameter, and consisting of 180 capsid proteins. The capsid encapsulate the genomic RNA and VP2 proteins. Attaches virion to target cells, inducing endocytosis of the viral particle. Acidification of the endosome induces conformational change of capsid protein thereby injecting virus genomic RNA into host cytoplasm. This chain is Genome polyprotein, found in Homo sapiens (Human).